We begin with the raw amino-acid sequence, 122 residues long: MIQQESVVKVADNSGAKRALVIRVLGGTRRRYAGLGDRVIVAVKDALPNGTVKKSDVAKAVVVRTVKETRRKDGSYIRFDENAVVIINDNGEPKATRIFGPVARELREKRYMKIVSLAPEVL.

The protein belongs to the universal ribosomal protein uL14 family. As to quaternary structure, part of the 50S ribosomal subunit. Forms a cluster with proteins L3 and L19. In the 70S ribosome, L14 and L19 interact and together make contacts with the 16S rRNA in bridges B5 and B8.

In terms of biological role, binds to 23S rRNA. Forms part of two intersubunit bridges in the 70S ribosome. The sequence is that of Large ribosomal subunit protein uL14 from Gemmatimonas aurantiaca (strain DSM 14586 / JCM 11422 / NBRC 100505 / T-27).